Consider the following 159-residue polypeptide: UPF0225 protein plu2503 (159 aa).

Belongs to the UPF0225 family.

The protein is UPF0225 protein plu2503 of Photorhabdus laumondii subsp. laumondii (strain DSM 15139 / CIP 105565 / TT01) (Photorhabdus luminescens subsp. laumondii).